The primary structure comprises 492 residues: MTPVTFALDLQRRQWEQAAELVDRTSAASDRAETVSEVSVGKTPNEVVYKENKLRLLHYESKTETQYDVPILIVYALINRPYILDLQPDRSVVQTLLEQGFDVYLIDWGEPSRLDTHLTLDDYVTRYIDNCVDIVRDRSGQDSINLLGYCMGGTMSVMYAALFPEKVRNLGLMAAGLVFDDTGGVLERWGDEQYYSPKAVTDAFGNVPSEFLDVGFALMDPVENFVTKYVRLFENVENESFVENFSRMEQWLSDGIDVAGETYKQFLEDVYQQNKLAQNELMLDGKQVDLERLEMPILQIVGEYDHLIPPEASKPFNDLVPSEDTEVIEGATGHIGLSVSSRSHGDLWPAVSDWFAERSETGTDETPDSETEETRPDSQAEETDETPDEGLKPQAAASNETVAEEPEPQVVESNETTEEELEPQAVEANETAPEELESIDGIGPTYAERLASVGITSVSGLAAADPSEIAATIDVPVSRVTAWVEQASDRTD.

The AB hydrolase-1 domain maps to 70–336 (PILIVYALIN…VIEGATGHIG (267 aa)). Residues cysteine 150, aspartate 305, and histidine 334 each act as charge relay system in the active site. Positions 359 to 443 (SETGTDETPD…EELESIDGIG (85 aa)) are disordered. 2 stretches are compositionally biased toward acidic residues: residues 362–371 (GTDETPDSET) and 379–388 (QAEETDETPD).

The protein belongs to the PHA/PHB synthase family. As to quaternary structure, heterodimer with PhaE.

It functions in the pathway biopolymer metabolism; poly-(R)-3-hydroxybutanoate biosynthesis. Involved in the production of polyhydroxyalkonic acids (PHAs), which are water-insoluble biopolymers used as intracellular energy reserve material when cells grow under conditions of nutrient limitation. PHAs are composed primarily of 3-hydroxybutyric acid (3HB) and 3-hydroxyvaleric acid (3HV). Required for the production of poly-beta-hydroxybutyrate (PHB) and poly(beta-hydroxybutyrate-co-beta-hydroxyvalerate) (PHBV). In Haloferax mediterranei (strain ATCC 33500 / DSM 1411 / JCM 8866 / NBRC 14739 / NCIMB 2177 / R-4) (Halobacterium mediterranei), this protein is Poly(3-hydroxyalkanoate) polymerase subunit PhaC (phaC).